The primary structure comprises 73 residues: Large ribosomal subunit protein bL31 (73 aa).

Belongs to the bacterial ribosomal protein bL31 family. Type A subfamily. In terms of assembly, part of the 50S ribosomal subunit.

Functionally, binds the 23S rRNA. This is Large ribosomal subunit protein bL31 (rpmE) from Jannaschia sp. (strain CCS1).